The primary structure comprises 136 residues: Small ribosomal subunit protein uS8c (136 aa).

It belongs to the universal ribosomal protein uS8 family. As to quaternary structure, part of the 30S ribosomal subunit.

It localises to the plastid. Its subcellular location is the chloroplast. In terms of biological role, one of the primary rRNA binding proteins, it binds directly to 16S rRNA central domain where it helps coordinate assembly of the platform of the 30S subunit. The chain is Small ribosomal subunit protein uS8c (rps8) from Saccharum officinarum (Sugarcane).